The chain runs to 320 residues: Cytochrome f (320 aa).

Positions 1–35 are cleaved as a signal peptide; that stretch reads MQTKNTFSWIKKEIIRSISVSLMIYIIARTSISNA. Heme-binding residues include Tyr-36, Cys-56, Cys-59, and His-60. A helical membrane pass occupies residues 286-306; sequence VQGLLFFLASVILAQIFLVLK.

It belongs to the cytochrome f family. In terms of assembly, the 4 large subunits of the cytochrome b6-f complex are cytochrome b6, subunit IV (17 kDa polypeptide, petD), cytochrome f and the Rieske protein, while the 4 small subunits are PetG, PetL, PetM and PetN. The complex functions as a dimer. Requires heme as cofactor.

Its subcellular location is the plastid. It is found in the chloroplast thylakoid membrane. Component of the cytochrome b6-f complex, which mediates electron transfer between photosystem II (PSII) and photosystem I (PSI), cyclic electron flow around PSI, and state transitions. The sequence is that of Cytochrome f from Eucalyptus globulus subsp. globulus (Tasmanian blue gum).